We begin with the raw amino-acid sequence, 351 residues long: Pleckstrin (351 aa).

One can recognise a PH 1 domain in the interval 4-101 (KRIREGYLVK…WVRDTKKAIK (98 aa)). Lys64 is modified (N6-acetyllysine). Residues Ser113 and Ser117 each carry the phosphoserine modification. One can recognise a DEP domain in the interval 136–221 (IEKGIKELNL…NPDAFYYFPD (86 aa)). Residues 244 to 348 (VIIKQGCLLK…WIKAIQVASR (105 aa)) enclose the PH 2 domain.

Functionally, major protein kinase C substrate of platelets. This Canis lupus familiaris (Dog) protein is Pleckstrin (PLEK).